The primary structure comprises 267 residues: Nus factor SuhB (267 aa).

Mg(2+) contacts are provided by Glu-67, Asp-84, and Leu-86. Position 67 (Glu-67) interacts with substrate. Residues 86-89 (LDGT), Arg-183, and Asp-212 each bind substrate.

This sequence belongs to the inositol monophosphatase superfamily. In terms of assembly, homodimer. The rRNA transcription and antitermination complex (rrnTAC) consists of RNA polymerase (RNAP), NusA, NusB, NusE (rpsJ), NusG, SubB, ribosomal protein S4, DNA and precursor rRNA; S4 is more flexible than other subunits. Mg(2+) is required as a cofactor.

The protein resides in the cytoplasm. The enzyme catalyses a myo-inositol phosphate + H2O = myo-inositol + phosphate. In terms of biological role, part of the processive rRNA transcription and antitermination complex (rrnTAC). The complex forms an RNA-chaperone ring around the RNA exit tunnel of RNA polymerase (RNAP). It supports rapid transcription and antitermination of rRNA operons, cotranscriptional rRNA folding, and annealing of distal rRNA regions to allow correct ribosome biogenesis. This subunit may play a central role in organizing the structure. IMPase activity is not required for its Nus factor function. The protein is Nus factor SuhB (suhB) of Escherichia coli O157:H7.